We begin with the raw amino-acid sequence, 419 residues long: MQKLIIHGGKPLEGSINISGAKNAVLPIMAASILTNKLHITNVPKLTDVSTMKDLLRNHGACIRIIEHTDEFELIINTTNINKFTADYEIVRKMRASIWVLGPLLTKYGKAKVSLPGGCAIGARQVDLHIAVLKSMGAEIEIEDGYINASSKGRLKGTHFIFDKVSVGATINAILAAVLAKGETVLFNCGREPEIVDLCYCLIKMGADILGVGSSTITIKGKDCLNETSYKVLSDRIEAGTYMFAAAITKGDVKICGIDYNIIENIALKLIETGIKVVQINNGVQVTYKGKLNSVDLETNPYPGFATDLQAQFMSLMSISSGVSMITENIFENRFMHVPELCRMGADIVVRGNKAVVRGVEMLKGAEVMASDLRASVSLILAGLSTNSKTVLHRIYHLDRGFQDLEKKLSNCGANIKRV.

Phosphoenolpyruvate is bound at residue 22 to 23; it reads KN. Residue R95 coordinates UDP-N-acetyl-alpha-D-glucosamine. Residue C119 is the Proton donor of the active site. At C119 the chain carries 2-(S-cysteinyl)pyruvic acid O-phosphothioketal. UDP-N-acetyl-alpha-D-glucosamine contacts are provided by residues 164 to 167, D308, and I330; that span reads KVSV.

The protein belongs to the EPSP synthase family. MurA subfamily.

It is found in the cytoplasm. It carries out the reaction phosphoenolpyruvate + UDP-N-acetyl-alpha-D-glucosamine = UDP-N-acetyl-3-O-(1-carboxyvinyl)-alpha-D-glucosamine + phosphate. The protein operates within cell wall biogenesis; peptidoglycan biosynthesis. Its function is as follows. Cell wall formation. Adds enolpyruvyl to UDP-N-acetylglucosamine. The polypeptide is UDP-N-acetylglucosamine 1-carboxyvinyltransferase (Rickettsia prowazekii (strain Madrid E)).